A 119-amino-acid polypeptide reads, in one-letter code: uncharacterized protein (119 aa).

This is an uncharacterized protein from Saccharomyces cerevisiae (strain ATCC 204508 / S288c) (Baker's yeast).